Consider the following 113-residue polypeptide: T cell receptor alpha variable 5 (113 aa).

The signal sequence occupies residues 1–22 (MKTFAGFSFLFLWLQLDCMSRG). An Ig-like domain is found at 23–113 (EDVEQSLFLS…DSAIYFCAES (91 aa)). N-linked (GlcNAc...) asparagine glycosylation is present at asparagine 42. Cysteines 43 and 110 form a disulfide.

In terms of assembly, alpha-beta TR is a heterodimer composed of an alpha and beta chain; disulfide-linked. The alpha-beta TR is associated with the transmembrane signaling CD3 coreceptor proteins to form the TR-CD3 (TcR or TCR). The assembly of alpha-beta TR heterodimers with CD3 occurs in the endoplasmic reticulum where a single alpha-beta TR heterodimer associates with one CD3D-CD3E heterodimer, one CD3G-CD3E heterodimer and one CD247 homodimer forming a stable octameric structure. CD3D-CD3E and CD3G-CD3E heterodimers preferentially associate with TR alpha and TR beta chains, respectively. The association of the CD247 homodimer is the last step of TcR assembly in the endoplasmic reticulum and is required for transport to the cell surface.

Its subcellular location is the cell membrane. Functionally, v region of the variable domain of T cell receptor (TR) alpha chain that participates in the antigen recognition. Alpha-beta T cell receptors are antigen specific receptors which are essential to the immune response and are present on the cell surface of T lymphocytes. Recognize peptide-major histocompatibility (MH) (pMH) complexes that are displayed by antigen presenting cells (APC), a prerequisite for efficient T cell adaptive immunity against pathogens. Binding of alpha-beta TR to pMH complex initiates TR-CD3 clustering on the cell surface and intracellular activation of LCK that phosphorylates the ITAM motifs of CD3G, CD3D, CD3E and CD247 enabling the recruitment of ZAP70. In turn ZAP70 phosphorylates LAT, which recruits numerous signaling molecules to form the LAT signalosome. The LAT signalosome propagates signal branching to three major signaling pathways, the calcium, the mitogen-activated protein kinase (MAPK) kinase and the nuclear factor NF-kappa-B (NF-kB) pathways, leading to the mobilization of transcription factors that are critical for gene expression and essential for T cell growth and differentiation. The T cell repertoire is generated in the thymus, by V-(D)-J rearrangement. This repertoire is then shaped by intrathymic selection events to generate a peripheral T cell pool of self-MH restricted, non-autoaggressive T cells. Post-thymic interaction of alpha-beta TR with the pMH complexes shapes TR structural and functional avidity. This is T cell receptor alpha variable 5 from Homo sapiens (Human).